A 699-amino-acid polypeptide reads, in one-letter code: MAREVPIEKLRNIGIVAHIDAGKTTTTERILYYTGKTYKIGEVHEGAATMDWMPQEKERGITITVATTACYWTRNGERYQINIIDTPGHVDFSVEVVRSMKVLDGIVFIFSAVEGVQPQSEANWRWADRFQVPRIAFINKMDRLGADFYRVFKEIEEKLTIKPVAIQIPLGAEDQFEGVIDLMEMKAIRWLEETLGAKYEVVDIPPEYQEKAQEWREKMIETIVETDDELMEKYLEGQEISIDELRKALRKATIERKLVPVLCGSAFKNKGVQPLLDAVIDYLPSPIDLPPVKGTNPKTGEEEVRHPSDDEPFCAYAFKVMSDPYAGQLTYIRVFSGTLKAGSYVYNATKDEKQRAGRLLLMHANSREEIQQVSAGEICAVVGLDAATGDTLCDEKHPIILEKLEFPDPVISMAIEPKTKKDQEKLSQVLNKFMKEDPTFRATTDPETGQILIHGMGELHLEIMVDRMKREYGIEVNVGKPQVAYKETIRKKAIGEGKFIKQTGGRGQYGHAIIEIEPLPRGAGFEFIDDIHGGVIPKEFIPSVEKGVKEAMQNGILAGYPVVDVRVRLFDGSYHEVDSSDIAFQVAGSLAFKDAAKKADPVLLEPIMEVEVETPEKYVGDVIGDLNSRRGKIMGMENKGVITVIKAHVPLAEMFGYATTLRSLTQGRGTFIMKFSHYDEVPQQIAEKIIGERMAGKSS.

A tr-type G domain is found at 8-287 (EKLRNIGIVA…AVIDYLPSPI (280 aa)). GTP-binding positions include 17 to 24 (AHIDAGKT), 85 to 89 (DTPGH), and 139 to 142 (NKMD).

It belongs to the TRAFAC class translation factor GTPase superfamily. Classic translation factor GTPase family. EF-G/EF-2 subfamily.

It localises to the cytoplasm. Its function is as follows. Catalyzes the GTP-dependent ribosomal translocation step during translation elongation. During this step, the ribosome changes from the pre-translocational (PRE) to the post-translocational (POST) state as the newly formed A-site-bound peptidyl-tRNA and P-site-bound deacylated tRNA move to the P and E sites, respectively. Catalyzes the coordinated movement of the two tRNA molecules, the mRNA and conformational changes in the ribosome. This chain is Elongation factor G (fusA), found in Aquifex aeolicus (strain VF5).